Reading from the N-terminus, the 670-residue chain is Probable potassium transport system protein Kup 1 (670 aa).

The next 13 helical transmembrane spans lie at 14–34 (GAGFIIAMGIVYGDIGTSPLY), 58–78 (LSLIIWTLTLITTVKYVWIAL), 101–121 (WLIIPAMIGGAALLSDGALTP), 147–167 (LPIVIITLAILAVLFLIQRFG), 175–195 (FGPVMFIWFSFLGITGLINLF), 196–216 (GDFSVLQAINPYWAIHLLLSP), 220–240 (AGIFVLGSVFLATTGAEALYS), 252–272 (VSWPFVKVCIILSYCGQGAWL), 294–314 (LIIFSVILATLAAIIASQALI), 345–365 (LYIPAVNLGLWLAASFIVVYF), 374–394 (AYGLAITVTMLMTTTLLTVYL), 403–423 (VLVGLFFTVFIFIEGLFFAAS), and 427–447 (FMHGGYVVVIIAAMILFVMAI).

This sequence belongs to the HAK/KUP transporter (TC 2.A.72) family.

It localises to the cell membrane. It carries out the reaction K(+)(in) + H(+)(in) = K(+)(out) + H(+)(out). Transport of potassium into the cell. Likely operates as a K(+):H(+) symporter. This Lactococcus lactis subsp. lactis (strain IL1403) (Streptococcus lactis) protein is Probable potassium transport system protein Kup 1.